The sequence spans 242 residues: MMPLAEAGALAQGGGPSATEWACILRRKTPRHKQPTLLMVRASRRSGKTSAVLKAGRQSVSGRKNSTSKDLVTLGASSLREERGHPLHPRHRKAVHLRTRGRTRGWVQTLARMSRRTRGPVERAAAAAAAAAGGDAGHAPFPPPPAADGARAPRSPGQVTPRGLRLRLPRRESLLRGLCRPLRPLLGFRESDSAKPASLRLLQHTPSARRNYRIAGARLMRSNYPPPLSSAALRGAGPTRRN.

Disordered regions lie at residues 43–70 and 112–162; these read SRRS…TSKD and RMSR…VTPR. A compositionally biased stretch (polar residues) spans 58-70; sequence QSVSGRKNSTSKD. Low complexity-rich tracts occupy residues 122–139 and 147–162; these read ERAA…AGHA and ADGA…VTPR.

This is an uncharacterized protein from Homo sapiens (Human).